The sequence spans 151 residues: Small ribosomal subunit protein uS15 (151 aa).

This sequence belongs to the universal ribosomal protein uS15 family.

The protein is Small ribosomal subunit protein uS15 (RpS13) of Plutella xylostella (Diamondback moth).